Consider the following 60-residue polypeptide: UPF0434 protein KPN78578_09190 (60 aa).

The protein belongs to the UPF0434 family.

This Klebsiella pneumoniae subsp. pneumoniae (strain ATCC 700721 / MGH 78578) protein is UPF0434 protein KPN78578_09190.